The primary structure comprises 431 residues: Large envelope protein (431 aa).

Residue Gly2 is the site of N-myristoyl glycine; by host attachment. Residues Gly2–Leu148 form a pre-S1 region. Residues Gly2–Ser207 form a pre-S region. Residues Gly2–Ser214 are Virion surface; in external conformation-facing. The Intravirion; in internal conformation segment spans residues Gly2–Arg286. Asn3 is a glycosylation site (N-linked (GlcNAc...) asparagine). Residues Ile115–Pro146 form a disordered region. The tract at residues Thr149–Ser207 is pre-S2. Residues Leu215–Ile235 traverse the membrane as a helical segment. Over Ala236 to Arg286 the chain is Intravirion; in external conformation. A helical transmembrane segment spans residues Phe287–Trp307. The Virion surface portion of the chain corresponds to Lys308–Asn379. The N-linked (GlcNAc...) asparagine; by host glycan is linked to Asn351. The helical transmembrane segment at Leu380–Ile400 threads the bilayer. Residues Trp401–Trp406 are Intravirion-facing. The helical transmembrane segment at Gly407–Val429 threads the bilayer. The Virion surface segment spans residues Tyr430–Ile431.

Belongs to the orthohepadnavirus major surface antigen family. In terms of assembly, in its internal form (Li-HBsAg), interacts with the capsid protein and with the isoform S. Interacts with host chaperone CANX. Associates with host chaperone CANX through its pre-S2 N glycan; this association may be essential for isoform M proper secretion. As to quaternary structure, interacts with isoform L. Interacts with the antigens of satellite virus HDV (HDVAgs); this interaction is required for encapsidation of HDV genomic RNA. In terms of processing, isoform M is N-terminally acetylated by host at a ratio of 90%, and N-glycosylated by host at the pre-S2 region. Post-translationally, myristoylated.

Its subcellular location is the virion membrane. The large envelope protein exists in two topological conformations, one which is termed 'external' or Le-HBsAg and the other 'internal' or Li-HBsAg. In its external conformation the protein attaches the virus to cell receptors and thereby initiating infection. This interaction determines the species specificity and liver tropism. This attachment induces virion internalization predominantly through caveolin-mediated endocytosis. The large envelope protein also assures fusion between virion membrane and endosomal membrane. In its internal conformation the protein plays a role in virion morphogenesis and mediates the contact with the nucleocapsid like a matrix protein. In terms of biological role, the middle envelope protein plays an important role in the budding of the virion. It is involved in the induction of budding in a nucleocapsid independent way. In this process the majority of envelope proteins bud to form subviral lipoprotein particles of 22 nm of diameter that do not contain a nucleocapsid. The polypeptide is Large envelope protein (Woodchuck hepatitis B virus (isolate 59) (WHV)).